The primary structure comprises 570 residues: Peptidyl-prolyl cis-trans isomerase FKBP9 (570 aa).

The N-terminal stretch at 1-24 (MAFRGWRPPPPPLLLLLLWVTGQA) is a signal peptide. 4 PPIase FKBP-type domains span residues 54–142 (GDFV…MDIW), 166–254 (SDFV…LDLH), 278–365 (GDFL…IDFH), and 389–477 (GDYL…LELV). Residues Asn174, Asn286, Asn302, and Asn397 are each glycosylated (N-linked (GlcNAc...) asparagine). EF-hand domains are found at residues 488–523 (WNGE…QVAS) and 533–568 (DAEL…AKHD). Asp501, Asp503, Asn505, Glu507, Glu512, Asp546, Asn548, Asp550, Lys552, and Glu557 together coordinate Ca(2+). The short motif at 567–570 (HDEL) is the Prevents secretion from ER element.

Post-translationally, phosphorylated.

The protein resides in the endoplasmic reticulum. The catalysed reaction is [protein]-peptidylproline (omega=180) = [protein]-peptidylproline (omega=0). Inhibited by FK506. Its function is as follows. PPIases accelerate the folding of proteins during protein synthesis. The sequence is that of Peptidyl-prolyl cis-trans isomerase FKBP9 (FKBP9) from Homo sapiens (Human).